Reading from the N-terminus, the 272-residue chain is 3-methyl-2-oxobutanoate hydroxymethyltransferase (272 aa).

D54 and D93 together coordinate Mg(2+). 3-methyl-2-oxobutanoate-binding positions include 54-55 (DS), D93, and K123. E125 lines the Mg(2+) pocket. E190 acts as the Proton acceptor in catalysis.

This sequence belongs to the PanB family. Homodecamer; pentamer of dimers. It depends on Mg(2+) as a cofactor.

The protein localises to the cytoplasm. The catalysed reaction is 3-methyl-2-oxobutanoate + (6R)-5,10-methylene-5,6,7,8-tetrahydrofolate + H2O = 2-dehydropantoate + (6S)-5,6,7,8-tetrahydrofolate. Its pathway is cofactor biosynthesis; (R)-pantothenate biosynthesis; (R)-pantoate from 3-methyl-2-oxobutanoate: step 1/2. Functionally, catalyzes the reversible reaction in which hydroxymethyl group from 5,10-methylenetetrahydrofolate is transferred onto alpha-ketoisovalerate to form ketopantoate. The polypeptide is 3-methyl-2-oxobutanoate hydroxymethyltransferase (Tropheryma whipplei (strain Twist) (Whipple's bacillus)).